The sequence spans 385 residues: Putative glutamate--cysteine ligase 2 (385 aa).

This sequence belongs to the glutamate--cysteine ligase type 2 family. YbdK subfamily.

The catalysed reaction is L-cysteine + L-glutamate + ATP = gamma-L-glutamyl-L-cysteine + ADP + phosphate + H(+). In terms of biological role, ATP-dependent carboxylate-amine ligase which exhibits weak glutamate--cysteine ligase activity. The sequence is that of Putative glutamate--cysteine ligase 2 from Solibacter usitatus (strain Ellin6076).